The chain runs to 65 residues: Large ribosomal subunit protein bL35 (65 aa).

The span at 1 to 43 shows a compositional bias: basic residues; that stretch reads MPKMKTRRGAAKRFAKTGSGKFKRRKQGLRHILTKKTAKRKSR. Positions 1–49 are disordered; it reads MPKMKTRRGAAKRFAKTGSGKFKRRKQGLRHILTKKTAKRKSRLGQSAT.

This sequence belongs to the bacterial ribosomal protein bL35 family.

This is Large ribosomal subunit protein bL35 from Maridesulfovibrio salexigens (strain ATCC 14822 / DSM 2638 / NCIMB 8403 / VKM B-1763) (Desulfovibrio salexigens).